Reading from the N-terminus, the 507-residue chain is Arabinose import ATP-binding protein AraG (507 aa).

2 consecutive ABC transporter domains span residues 14–249 (LRFN…MVGR) and 249–505 (RDIQ…LPRT). An ATP-binding site is contributed by 46–53 (GENGAGKS).

This sequence belongs to the ABC transporter superfamily. Arabinose importer (TC 3.A.1.2.2) family. The complex is composed of two ATP-binding proteins (AraG), two transmembrane proteins (AraH) and a solute-binding protein (AraF).

The protein resides in the cell inner membrane. It carries out the reaction L-arabinose(out) + ATP + H2O = L-arabinose(in) + ADP + phosphate + H(+). In terms of biological role, part of the ABC transporter complex AraFGH involved in arabinose import. Responsible for energy coupling to the transport system. This is Arabinose import ATP-binding protein AraG from Pseudomonas syringae pv. tomato (strain ATCC BAA-871 / DC3000).